Consider the following 88-residue polypeptide: Small ribosomal subunit protein uS15 (88 aa).

This sequence belongs to the universal ribosomal protein uS15 family. Part of the 30S ribosomal subunit. Forms a bridge to the 50S subunit in the 70S ribosome, contacting the 23S rRNA.

Its function is as follows. One of the primary rRNA binding proteins, it binds directly to 16S rRNA where it helps nucleate assembly of the platform of the 30S subunit by binding and bridging several RNA helices of the 16S rRNA. Functionally, forms an intersubunit bridge (bridge B4) with the 23S rRNA of the 50S subunit in the ribosome. The polypeptide is Small ribosomal subunit protein uS15 (Borrelia garinii subsp. bavariensis (strain ATCC BAA-2496 / DSM 23469 / PBi) (Borreliella bavariensis)).